Here is a 142-residue protein sequence, read N- to C-terminus: MRAVVQRVTNARVTVSGRTVGQITRPGLVVLVGVTHTDTVRQAHALAVKVHELRILRGELSCAQTGAPILVVSQFTLYGDTRKGRRPSWDAAAPAATAEPLIEAFVAELRRRGAEVATGVFGADMLVELANDGPVTLVLDVD.

The Gly-cisPro motif, important for rejection of L-amino acids motif lies at 133–134 (GP).

This sequence belongs to the DTD family. In terms of assembly, homodimer.

It is found in the cytoplasm. The enzyme catalyses glycyl-tRNA(Ala) + H2O = tRNA(Ala) + glycine + H(+). The catalysed reaction is a D-aminoacyl-tRNA + H2O = a tRNA + a D-alpha-amino acid + H(+). In terms of biological role, an aminoacyl-tRNA editing enzyme that deacylates mischarged D-aminoacyl-tRNAs. Also deacylates mischarged glycyl-tRNA(Ala), protecting cells against glycine mischarging by AlaRS. Acts via tRNA-based rather than protein-based catalysis; rejects L-amino acids rather than detecting D-amino acids in the active site. By recycling D-aminoacyl-tRNA to D-amino acids and free tRNA molecules, this enzyme counteracts the toxicity associated with the formation of D-aminoacyl-tRNA entities in vivo and helps enforce protein L-homochirality. This is D-aminoacyl-tRNA deacylase from Acidothermus cellulolyticus (strain ATCC 43068 / DSM 8971 / 11B).